The following is a 625-amino-acid chain: Probable potassium transport system protein Kup (625 aa).

Transmembrane regions (helical) follow at residues 13 to 33 (TALAALGVVFGDIGTSPLYAL), 53 to 73 (ILSIIFWCLMLIISIKYVAIV), 103 to 123 (IYMIAIGFIGASLFFGDGIIT), 141 to 161 (VFDPFIMPIAIAIIVTLFLVQ), 172 to 192 (FGPITLVWFLSLGILGIHSVI), 206 to 226 (AIQFIYHHPIMTFFVMGAVVL), 250 to 270 (WFFVVLPCLVLNYAGQGALLL), 282 to 302 (LLVPQWALYPMIIMATMATVI), 340 to 360 (IYVPFLNWLLLIAIIILILIF), 369 to 389 (AYGLAVTLTMLCDTILVAVFI), 400 to 420 (VLLLIIPFFILESVLVGATSL), and 422 to 442 (ILSGGWVPLLIGAIAVTILMT).

The protein belongs to the HAK/KUP transporter (TC 2.A.72) family.

It is found in the cell inner membrane. It carries out the reaction K(+)(in) + H(+)(in) = K(+)(out) + H(+)(out). Functionally, transport of potassium into the cell. Likely operates as a K(+):H(+) symporter. In Acinetobacter baumannii (strain AYE), this protein is Probable potassium transport system protein Kup.